The chain runs to 277 residues: Collectin-10 (277 aa).

A signal peptide spans 1–27; sequence MNGFASLLRRNQFILLVLFLLQIQSLG. Positions 40 to 107 are disordered; sequence ATHTISPGPK…GDKGEKGLLG (68 aa). The segment covering 49-64 has biased composition (basic and acidic residues); that stretch reads KGDDGEKGDPGEEGKH. One can recognise a Collagen-like domain in the interval 53–112; that stretch reads GEKGDPGEEGKHGKVGRMGPKGIKGELGDMGDQGNIGKTGPIGKKGDKGEKGLLGIPGEK. The C-type lectin domain maps to 155–271; sequence TEEKFYYIVQ…CHLTMYFVCE (117 aa). Cystine bridges form between C176–C270 and C248–C262. An N-linked (GlcNAc...) asparagine glycan is attached at N258.

The protein belongs to the COLEC10/COLEC11 family. In terms of tissue distribution, highly expressed in liver, placenta and adrenal gland. Moderately expressed in small intestine, lung, stomach and prostate. Weakly expressed in trachea and spleen.

The protein localises to the secreted. It is found in the golgi apparatus. Its subcellular location is the cytoplasm. Functionally, lectin that binds to various sugars: galactose &gt; mannose = fucose &gt; N-acetylglucosamine &gt; N-acetylgalactosamine. Acts as a chemoattractant, probably involved in the regulation of cell migration. The protein is Collectin-10 (COLEC10) of Homo sapiens (Human).